Consider the following 118-residue polypeptide: Ribulose bisphosphate carboxylase small subunit (118 aa).

It belongs to the RuBisCO small chain family. As to quaternary structure, heterohexadecamer of 8 large and 8 small subunits.

Its function is as follows. RuBisCO catalyzes two reactions: the carboxylation of D-ribulose 1,5-bisphosphate, the primary event in carbon dioxide fixation, as well as the oxidative fragmentation of the pentose substrate. Both reactions occur simultaneously and in competition at the same active site. Although the small subunit is not catalytic it is essential for maximal activity. The sequence is that of Ribulose bisphosphate carboxylase small subunit from Thiobacillus denitrificans (strain ATCC 25259 / T1).